Consider the following 522-residue polypeptide: Lysine--tRNA ligase (522 aa).

The 'HIGH' region motif lies at 44 to 52; it reads PSGLPHIGT. The short motif at 290–294 is the 'KMSKS' region element; sequence KISKS. Lys293 is a binding site for ATP.

This sequence belongs to the class-I aminoacyl-tRNA synthetase family.

The protein resides in the cytoplasm. It carries out the reaction tRNA(Lys) + L-lysine + ATP = L-lysyl-tRNA(Lys) + AMP + diphosphate. The protein is Lysine--tRNA ligase of Rickettsia conorii (strain ATCC VR-613 / Malish 7).